The sequence spans 382 residues: UDP-4-amino-4-deoxy-L-arabinose--oxoglutarate aminotransferase (382 aa).

Lys182 is modified (N6-(pyridoxal phosphate)lysine).

It belongs to the DegT/DnrJ/EryC1 family. ArnB subfamily. Homodimer. Pyridoxal 5'-phosphate is required as a cofactor.

The catalysed reaction is UDP-4-amino-4-deoxy-beta-L-arabinose + 2-oxoglutarate = UDP-beta-L-threo-pentopyranos-4-ulose + L-glutamate. It participates in nucleotide-sugar biosynthesis; UDP-4-deoxy-4-formamido-beta-L-arabinose biosynthesis; UDP-4-deoxy-4-formamido-beta-L-arabinose from UDP-alpha-D-glucuronate: step 2/3. It functions in the pathway bacterial outer membrane biogenesis; lipopolysaccharide biosynthesis. In terms of biological role, catalyzes the conversion of UDP-4-keto-arabinose (UDP-Ara4O) to UDP-4-amino-4-deoxy-L-arabinose (UDP-L-Ara4N). The modified arabinose is attached to lipid A and is required for resistance to polymyxin and cationic antimicrobial peptides. This Pectobacterium atrosepticum (strain SCRI 1043 / ATCC BAA-672) (Erwinia carotovora subsp. atroseptica) protein is UDP-4-amino-4-deoxy-L-arabinose--oxoglutarate aminotransferase.